The primary structure comprises 611 residues: tRNA uridine 5-carboxymethylaminomethyl modification enzyme MnmG (611 aa).

FAD is bound by residues 12 to 17 (GGGHAG), valine 124, and serine 179. 271–285 (GPRYCPSVEDKIVRF) lines the NAD(+) pocket. Glutamine 368 contributes to the FAD binding site.

This sequence belongs to the MnmG family. In terms of assembly, homodimer. Heterotetramer of two MnmE and two MnmG subunits. The cofactor is FAD.

It localises to the cytoplasm. In terms of biological role, NAD-binding protein involved in the addition of a carboxymethylaminomethyl (cmnm) group at the wobble position (U34) of certain tRNAs, forming tRNA-cmnm(5)s(2)U34. This Mycoplasma mobile (strain ATCC 43663 / 163K / NCTC 11711) (Mesomycoplasma mobile) protein is tRNA uridine 5-carboxymethylaminomethyl modification enzyme MnmG.